A 568-amino-acid chain; its full sequence is Urease subunit alpha (568 aa).

The region spanning 133–568 (GGVDTHIHFI…LPLAQKYFLF (436 aa)) is the Urease domain. Ni(2+) is bound by residues H138, H140, and K221. K221 is modified (N6-carboxylysine). H223 provides a ligand contact to substrate. Positions 250 and 276 each coordinate Ni(2+). Residue H324 is the Proton donor of the active site. D364 is a Ni(2+) binding site.

This sequence belongs to the metallo-dependent hydrolases superfamily. Urease alpha subunit family. As to quaternary structure, heterohexamer of 3 UreC (alpha) and 3 UreAB (gamma/beta) subunits. Ni cation serves as cofactor. Post-translationally, carboxylation allows a single lysine to coordinate two nickel ions.

It is found in the cytoplasm. It catalyses the reaction urea + 2 H2O + H(+) = hydrogencarbonate + 2 NH4(+). The protein operates within nitrogen metabolism; urea degradation; CO(2) and NH(3) from urea (urease route): step 1/1. The protein is Urease subunit alpha of Deinococcus radiodurans (strain ATCC 13939 / DSM 20539 / JCM 16871 / CCUG 27074 / LMG 4051 / NBRC 15346 / NCIMB 9279 / VKM B-1422 / R1).